Reading from the N-terminus, the 452-residue chain is AP-4 complex subunit mu-1 (452 aa).

The MHD domain maps to 184 to 451 (KNEVFLDVVE…LSHSDAYVIR (268 aa)).

It belongs to the adaptor complexes medium subunit family. In terms of assembly, adaptor protein complex 4 (AP-4) is a heterotetramer composed of two large adaptins (epsilon-type subunit AP4E1 and beta-type subunit AP4B1), a medium adaptin (mu-type subunit AP4M1) and a small adaptin (sigma-type AP4S1). Interacts with tyrosine-based sorting signals on the cytoplasmic tail of cargo proteins such as APP, ATG9A, LAMP2 and NAGPA. Interacts with the C-terminal domain of GRID2. Interacts with GRIA1 and GRIA2; the interaction is indirect via CACNG3. Interacts with CACNG3; CACNG3 associates GRIA1 and GRIA2 with the adaptor protein complex 4 (AP-4) to target them to the somatodendritic compartment of neurons. Interacts with HOOK1 and HOOK2; the interactions are direct, mediate the interaction between FTS-Hook-FHIP (FHF) complex and AP-4 and the perinuclear distribution of AP-4.

It localises to the golgi apparatus. It is found in the trans-Golgi network membrane. The protein localises to the early endosome. Its function is as follows. Component of the adaptor protein complex 4 (AP-4). Adaptor protein complexes are vesicle coat components involved both in vesicle formation and cargo selection. They control the vesicular transport of proteins in different trafficking pathways. AP-4 forms a non clathrin-associated coat on vesicles departing the trans-Golgi network (TGN) and may be involved in the targeting of proteins from the trans-Golgi network (TGN) to the endosomal-lysosomal system. It is also involved in protein sorting to the basolateral membrane in epithelial cells and the proper asymmetric localization of somatodendritic proteins in neurons. Within AP-4, the mu-type subunit AP4M1 is directly involved in the recognition and binding of tyrosine-based sorting signals found in the cytoplasmic part of cargos. The adaptor protein complex 4 (AP-4) may also recognize other types of sorting signal. The protein is AP-4 complex subunit mu-1 of Bos taurus (Bovine).